The chain runs to 481 residues: UDP-glycosyltransferase 71K2 (481 aa).

Residues Ser285, 350-351, 368-376, and 390-393 contribute to the UDP-alpha-D-glucose site; these read WA, HCGWNSILE, and YAEQ.

It belongs to the UDP-glycosyltransferase family.

Glycosyltransferase that possesses chalcone and flavonol 2'-O-glycosyltransferase activity. Converts phloretin to phlorizin (phloretin 2'-O-glucoside), a potent antioxidant. Possesses glycosyltransferase activity toward quercetin, isoliquiritigenin, butein and caffeic acid. The polypeptide is UDP-glycosyltransferase 71K2 (Pyrus communis (Pear)).